The following is a 72-amino-acid chain: Variant surface glycoprotein MITAT 1.1000BC (72 aa).

D50 is lipidated: GPI-anchor amidated aspartate. The propeptide at 51–72 is removed in mature form; sequence GSFLVNKKFALMVYDFVSLLAF.

It is found in the cell membrane. In terms of biological role, VSG forms a coat on the surface of the parasite. The trypanosome evades the immune response of the host by expressing a series of antigenically distinct VSGs from an estimated 1000 VSG genes. The sequence is that of Variant surface glycoprotein MITAT 1.1000BC from Trypanosoma brucei brucei.